Consider the following 1165-residue polypeptide: Leptin receptor (1165 aa).

The first 21 residues, 1 to 21 (MTCPKFSVALLHWEFIYVITA), serve as a signal peptide directing secretion. Topologically, residues 22–838 (FDLAYPITPW…TQDGEKHRND (817 aa)) are extracellular. 5 disulfide bridges follow: cysteine 37–cysteine 90, cysteine 89–cysteine 99, cysteine 131–cysteine 142, cysteine 186–cysteine 196, and cysteine 188–cysteine 193. N-linked (GlcNAc...) asparagine glycans are attached at residues asparagine 41, asparagine 55, asparagine 72, asparagine 80, and asparagine 98. A glycan (N-linked (GlcNAc...) asparagine) is linked at asparagine 187. 4 N-linked (GlcNAc...) asparagine glycosylation sites follow: asparagine 206, asparagine 276, asparagine 347, and asparagine 397. One can recognise a Fibronectin type-III 1 domain in the interval 239–332 (PPLGLHMEIT…STPFTFTTQD (94 aa)). Disulfide bonds link cysteine 352–cysteine 412 and cysteine 413–cysteine 418. A glycan (N-linked (GlcNAc...) asparagine) is linked at asparagine 433. Disulfide bonds link cysteine 436–cysteine 447, cysteine 473–cysteine 528, and cysteine 488–cysteine 498. The segment at 467–484 (HRSSLYCSDVPSVHPISE) is leptin-binding. Fibronectin type-III domains follow at residues 539-634 (PPSS…TVVT), 642-736 (GPEF…WPMS), and 740-834 (IVQS…DGEK). The WSXWS motif signature appears at 622–626 (WSNWS). N-linked (GlcNAc...) asparagine glycans are attached at residues asparagine 624, asparagine 659, asparagine 670, asparagine 697, asparagine 728, and asparagine 750. Residues 839-861 (AGLYVIVPIIISSSILLLGTLLM) form a helical membrane-spanning segment. The Cytoplasmic segment spans residues 862–1165 (SHQRMKKLFW…MENKMYDLTV (304 aa)). A Box 1 motif motif is present at residues 870-878 (FWEDVPNPK). Serine 881 is subject to Phosphoserine. The interval 892–897 (ETFEHL) is required for JAK2 activation. Positions 897–905 (LFIKHTESV) are required for STAT3 phosphorylation. Tyrosine 986 bears the Phosphotyrosine; by JAK2 mark. Tyrosine 1079 carries the phosphotyrosine modification. At tyrosine 1141 the chain carries Phosphotyrosine; by JAK2.

This sequence belongs to the type I cytokine receptor family. Type 2 subfamily. As to quaternary structure, present as a mixture of monomers and dimers. The phosphorylated receptor binds a number of SH2 domain-containing proteins such as JAK2, STAT3, PTPN11, and SOCS3. Interaction with SOCS3 inhibits JAK/STAT signaling and MAPK cascade. Post-translationally, on ligand binding, phosphorylated on two conserved C-terminal tyrosine residues by JAK2. Tyr-986 is required for complete binding and activation of PTPN11, ERK/FOS activation,for interaction with SOCS3 and SOCS3 mediated inhibition of leptin signaling. Phosphorylation on Tyr-1141 is required for STAT3 binding/activation. Phosphorylation of Tyr-1079 has a more accessory role. As to expression, kidney, liver, spleen, lung, brain, testis, uterus, ovary, corpus luteum, theca and granulosa cells.

The protein resides in the cell membrane. Its subcellular location is the basolateral cell membrane. Receptor for hormone LEP/leptin. On ligand binding, mediates LEP central and peripheral effects through the activation of different signaling pathways such as JAK2/STAT3 and MAPK cascade/FOS. In the hypothalamus, LEP acts as an appetite-regulating factor that induces a decrease in food intake and an increase in energy consumption by inducing anorexinogenic factors and suppressing orexigenic neuropeptides, also regulates bone mass and secretion of hypothalamo-pituitary-adrenal hormones. In the periphery, increases basal metabolism, influences reproductive function, regulates pancreatic beta-cell function and insulin secretion, is pro-angiogenic and affects innate and adaptive immunity. Control of energy homeostasis and melanocortin production (stimulation of POMC and full repression of AgRP transcription) is mediated by STAT3 signaling, whereas distinct signals regulate NPY and the control of fertility, growth and glucose homeostasis. Involved in the regulation of counter-regulatory response to hypoglycemia by inhibiting neurons of the parabrachial nucleus. Has a specific effect on T lymphocyte responses, differentially regulating the proliferation of naive and memory T-cells. Leptin increases Th1 and suppresses Th2 cytokine production. This is Leptin receptor (LEPR) from Sus scrofa (Pig).